The primary structure comprises 137 residues: Small ribosomal subunit protein uS12 (137 aa).

At Asp89 the chain carries 3-methylthioaspartic acid. Residues 105-137 form a disordered region; it reads AGVAGRTQRRSKYGAKRPKAGQAAAPAKGKGKK. A compositionally biased stretch (basic residues) spans 111–123; sequence TQRRSKYGAKRPK. The span at 124–137 shows a compositional bias: low complexity; the sequence is AGQAAAPAKGKGKK.

This sequence belongs to the universal ribosomal protein uS12 family. In terms of assembly, part of the 30S ribosomal subunit. Contacts proteins S8 and S17. May interact with IF1 in the 30S initiation complex.

Its function is as follows. With S4 and S5 plays an important role in translational accuracy. Functionally, interacts with and stabilizes bases of the 16S rRNA that are involved in tRNA selection in the A site and with the mRNA backbone. Located at the interface of the 30S and 50S subunits, it traverses the body of the 30S subunit contacting proteins on the other side and probably holding the rRNA structure together. The combined cluster of proteins S8, S12 and S17 appears to hold together the shoulder and platform of the 30S subunit. This Phocaeicola vulgatus (strain ATCC 8482 / DSM 1447 / JCM 5826 / CCUG 4940 / NBRC 14291 / NCTC 11154) (Bacteroides vulgatus) protein is Small ribosomal subunit protein uS12.